A 199-amino-acid chain; its full sequence is Adenylyl-sulfate kinase (199 aa).

A disordered region spans residues 1–21; the sequence is MSQSSNITWHDSEVTKSDRQQ. Residues 10 to 19 are compositionally biased toward basic and acidic residues; sequence HDSEVTKSDR. An ATP-binding site is contributed by 34–41; the sequence is GLSGSGKS. Serine 108 (phosphoserine intermediate) is an active-site residue.

This sequence belongs to the APS kinase family.

The catalysed reaction is adenosine 5'-phosphosulfate + ATP = 3'-phosphoadenylyl sulfate + ADP + H(+). It functions in the pathway sulfur metabolism; hydrogen sulfide biosynthesis; sulfite from sulfate: step 2/3. Catalyzes the synthesis of activated sulfate. The sequence is that of Adenylyl-sulfate kinase from Staphylococcus haemolyticus (strain JCSC1435).